Consider the following 1357-residue polypeptide: DNA-directed RNA polymerase subunit beta (1357 aa).

This sequence belongs to the RNA polymerase beta chain family. The RNAP catalytic core consists of 2 alpha, 1 beta, 1 beta' and 1 omega subunit. When a sigma factor is associated with the core the holoenzyme is formed, which can initiate transcription.

It catalyses the reaction RNA(n) + a ribonucleoside 5'-triphosphate = RNA(n+1) + diphosphate. In terms of biological role, DNA-dependent RNA polymerase catalyzes the transcription of DNA into RNA using the four ribonucleoside triphosphates as substrates. The polypeptide is DNA-directed RNA polymerase subunit beta (Pseudomonas savastanoi pv. phaseolicola (strain 1448A / Race 6) (Pseudomonas syringae pv. phaseolicola (strain 1448A / Race 6))).